Reading from the N-terminus, the 161-residue chain is Globin CTT-VIIB-4 (161 aa).

The signal sequence occupies residues 1-16 (MKFFAVLALCIVGAIA). The Globin domain maps to 18–161 (PLTADEASLV…NTMAVAVAHL (144 aa)). Positions 76 and 111 each coordinate heme b.

The protein belongs to the globin family. Homodimer.

In Chironomus thummi thummi (Midge), this protein is Globin CTT-VIIB-4 (CTT-7B4).